Consider the following 336-residue polypeptide: Holliday junction branch migration complex subunit RuvB (336 aa).

Positions 4–184 (ADRLISAGAT…FGIVQRLEFY (181 aa)) are large ATPase domain (RuvB-L). Residues isoleucine 23, arginine 24, glycine 65, lysine 68, threonine 69, threonine 70, 131–133 (EDY), arginine 174, tyrosine 184, and arginine 221 each bind ATP. Position 69 (threonine 69) interacts with Mg(2+). The small ATPAse domain (RuvB-S) stretch occupies residues 185-255 (QVPDLQHIVG…IAAQALDMLN (71 aa)). Positions 258–336 (AEGFDYMDRK…HFGITPPEMP (79 aa)) are head domain (RuvB-H). Arginine 294, arginine 313, and arginine 318 together coordinate DNA.

Belongs to the RuvB family. As to quaternary structure, homohexamer. Forms an RuvA(8)-RuvB(12)-Holliday junction (HJ) complex. HJ DNA is sandwiched between 2 RuvA tetramers; dsDNA enters through RuvA and exits via RuvB. An RuvB hexamer assembles on each DNA strand where it exits the tetramer. Each RuvB hexamer is contacted by two RuvA subunits (via domain III) on 2 adjacent RuvB subunits; this complex drives branch migration. In the full resolvosome a probable DNA-RuvA(4)-RuvB(12)-RuvC(2) complex forms which resolves the HJ.

Its subcellular location is the cytoplasm. It carries out the reaction ATP + H2O = ADP + phosphate + H(+). The RuvA-RuvB-RuvC complex processes Holliday junction (HJ) DNA during genetic recombination and DNA repair, while the RuvA-RuvB complex plays an important role in the rescue of blocked DNA replication forks via replication fork reversal (RFR). RuvA specifically binds to HJ cruciform DNA, conferring on it an open structure. The RuvB hexamer acts as an ATP-dependent pump, pulling dsDNA into and through the RuvAB complex. RuvB forms 2 homohexamers on either side of HJ DNA bound by 1 or 2 RuvA tetramers; 4 subunits per hexamer contact DNA at a time. Coordinated motions by a converter formed by DNA-disengaged RuvB subunits stimulates ATP hydrolysis and nucleotide exchange. Immobilization of the converter enables RuvB to convert the ATP-contained energy into a lever motion, pulling 2 nucleotides of DNA out of the RuvA tetramer per ATP hydrolyzed, thus driving DNA branch migration. The RuvB motors rotate together with the DNA substrate, which together with the progressing nucleotide cycle form the mechanistic basis for DNA recombination by continuous HJ branch migration. Branch migration allows RuvC to scan DNA until it finds its consensus sequence, where it cleaves and resolves cruciform DNA. The polypeptide is Holliday junction branch migration complex subunit RuvB (Salmonella agona (strain SL483)).